The sequence spans 722 residues: Transmembrane channel-like protein 8 (722 aa).

Positions 1 to 21 (MFRQWSVQSGPAPRRPESQAA) are disordered. Residues 1–118 (MFRQWSVQSG…GIQSYFTFLR (118 aa)) are Cytoplasmic-facing. Ser6 and Ser18 each carry phosphoserine. A helical transmembrane segment spans residues 119 to 139 (FLLLLNLLTMLLTACFVLLPL). Over 140 to 204 (VWLRPPELGP…AGPESSSEYS (65 aa)) the chain is Lumenal. Asn184 is a glycosylation site (N-linked (GlcNAc...) asparagine). A helical transmembrane segment spans residues 205–225 (IRLAYLLSPMVCLLLCFCGIL). Residues 226–307 (QRMAEGLPQQ…CRLLTYLRTN (82 aa)) lie on the Cytoplasmic side of the membrane. Residues 308–328 (ILIVLLVVGAISAIFWATKYS) traverse the membrane as a helical segment. Topologically, residues 329 to 375 (QDNKEESLFLVLQYLPPGVISLVNFLGPQLFTVLIQLENYPPGTEVN) are lumenal. The interval 366–534 (ENYPPGTEVN…SPRRFRASSS (169 aa)) is TMC domain. Residue Asn375 is glycosylated (N-linked (GlcNAc...) asparagine). The chain crosses the membrane as a helical span at residues 376–396 (LTLIWCVVLKLASLGMFSFSL). Residues 397–430 (GQTVLCIGRNKTSCESYGYNACDYQCWENSVGEE) lie on the Cytoplasmic side of the membrane. A helical membrane pass occupies residues 431–451 (LYKLIIFNFLLTVAFAFLVSL). Over 452-492 (PRRLLVERFSGWFWTWLDREEFLVPKNVLDIVAAQTVTWMG) the chain is Lumenal. Residues 493–513 (LFYCPLLPLLNSVFLFLTFYI) traverse the membrane as a helical segment. The Cytoplasmic segment spans residues 514-536 (KKYTLLRNSRASPRRFRASSSTF). Residues 537–557 (FFHLVLLLGLLLAAVPLAYVI) traverse the membrane as a helical segment. The Lumenal segment spans residues 558 to 598 (SSTHSSWDCGLFTNYSAPWQVVPELVALQLPLPSQRALRYL). Asn571 carries an N-linked (GlcNAc...) asparagine glycan. A helical transmembrane segment spans residues 599–619 (SSHAFSFPLLILLSIVLTVCI). At 620 to 722 (SQSRANARAI…RFHFPSRTEL (103 aa)) the chain is on the cytoplasmic side. Ser658, Ser663, and Ser673 each carry phosphoserine. The segment at 658 to 722 (SPEPGSPHSR…RFHFPSRTEL (65 aa)) is disordered. Pro residues predominate over residues 678–687 (FPCPGSPGPR). Residues 689-712 (PRLAPSNRLSSSSLGAPSASVPAS) are compositionally biased toward low complexity. Position 698 is a phosphoserine (Ser698).

It belongs to the TMC family. Interacts with TMC6. Interacts and forms a complex with TMC6 and CIB1; the interaction stabilizes each component of the complex. Interacts and forms a complex with TMC6 and SLC30A1/ZNT1; the interaction regulates zinc transport into the ER. Interacts with TRADD; the interaction competes with TRADD/RIPK1/TRAF2/cIAPs complex I formation and facilites complex II formation. Expressed in thymus, lung, prostate, placenta, testis and spleen. Expressed in lymphocytes and peripheral lymphocytes.

It is found in the endoplasmic reticulum membrane. The protein localises to the golgi apparatus membrane. The protein resides in the nucleus membrane. Its function is as follows. Acts as a regulatory protein involved in the regulation of numerous cellular processes. Together with its homolog TMC6/EVER1, forms a complex with calcium-binding protein CIB1 in lymphocytes and keratynocytes where TMC6 and TMC8 stabilize CIB1 levels and reciprocally. Together with TMC6, also forms a complex with and activates zinc transporter ZNT1 at the ER membrane of keratynocytes, thereby facilitating zinc uptake into the ER. Also inhibits receptor-mediated calcium release from ER stores and calcium activated and volume regulated chloride channels. Down-regulates the activity of transcription factors induced by zinc and cytokines. Also sequesters TRADD which impairs the recruitment of TRAF2 and RIPK1 in the pro-survival complex I and promotes proapoptotic complex II formation, and may therefore be involved in TNF-induced cell death/survival decisions. The chain is Transmembrane channel-like protein 8 from Mus musculus (Mouse).